Consider the following 582-residue polypeptide: Pineapple eye protein (582 aa).

The segment at 6 to 44 (ELQCLICKYSDTDDLVFGEWMIVRNLQVHYFCLLLSTHL) adopts a C2HC pre-PHD-type zinc-finger fold. Positions 6 to 119 (ELQCLICKYS…QYKSYCYKCR (114 aa)) are extended PHD domain (ePHD). Residues 72 to 119 (RKCWYCNKIGASLQCDRCRSLFHLKCGLENRAVFEFCGQYKSYCYKCR) form a PHD-type; atypical zinc finger. Disordered stretches follow at residues 292–311 (PART…DGSF) and 323–422 (RSLT…ASEI). The span at 340–363 (SSNITVIFSQPKSNATSERLSLSP) shows a compositional bias: polar residues. The segment covering 383-399 (SIDENHSPQPIARRDTS) has biased composition (basic and acidic residues).

Functionally, required for survival of imaginal disk cells possibly by regulation of cell apoptosis. Required for germline stem cell self-renewal through mediation of BMP signaling. In Drosophila melanogaster (Fruit fly), this protein is Pineapple eye protein.